A 505-amino-acid chain; its full sequence is Protein amnionless (505 aa).

A signal peptide spans 1 to 20 (MGLHWQWLIWALVGLHVALA). Over 21 to 344 (TKWYGGGMDF…RPYNPNVSFS (324 aa)) the chain is Extracellular. Residues 345-365 (SIVLILFCMALVGLVSVVILA) traverse the membrane as a helical segment. At 366–505 (HFMPENPYLN…CEADTDEETI (140 aa)) the chain is on the cytoplasmic side. A disordered region spans residues 451-482 (GALEEAAKESQEQDEILSVPKMETGDLDARSV). The segment covering 473 to 482 (ETGDLDARSV) has biased composition (basic and acidic residues).

As to expression, specifically expressed in nephrocytes.

Its subcellular location is the cell membrane. Its function is as follows. Required in the nephrocyte for normal uptake of proteins and elimination of toxins, and for maintenance of endocytic trafficking structures. May function together with Cubn. This is Protein amnionless from Drosophila melanogaster (Fruit fly).